A 324-amino-acid chain; its full sequence is Acetyl-coenzyme A carboxylase carboxyl transferase subunit alpha (324 aa).

A CoA carboxyltransferase C-terminal domain is found at 37–291 (ILEEKLENLE…DLMIQKTFQQ (255 aa)).

The protein belongs to the AccA family. In terms of assembly, acetyl-CoA carboxylase is a heterohexamer composed of biotin carboxyl carrier protein (AccB), biotin carboxylase (AccC) and two subunits each of ACCase subunit alpha (AccA) and ACCase subunit beta (AccD).

The protein localises to the cytoplasm. It carries out the reaction N(6)-carboxybiotinyl-L-lysyl-[protein] + acetyl-CoA = N(6)-biotinyl-L-lysyl-[protein] + malonyl-CoA. The protein operates within lipid metabolism; malonyl-CoA biosynthesis; malonyl-CoA from acetyl-CoA: step 1/1. In terms of biological role, component of the acetyl coenzyme A carboxylase (ACC) complex. First, biotin carboxylase catalyzes the carboxylation of biotin on its carrier protein (BCCP) and then the CO(2) group is transferred by the carboxyltransferase to acetyl-CoA to form malonyl-CoA. The sequence is that of Acetyl-coenzyme A carboxylase carboxyl transferase subunit alpha from Bacillus cereus (strain ATCC 14579 / DSM 31 / CCUG 7414 / JCM 2152 / NBRC 15305 / NCIMB 9373 / NCTC 2599 / NRRL B-3711).